An 865-amino-acid polypeptide reads, in one-letter code: Rifampicin phosphotransferase (865 aa).

Positions 2–314 (SGRLVVDLQD…FHIVQSRPIT (313 aa)) are ATP-binding. The ATP site is built by lysine 23, arginine 117, glycine 132, threonine 136, glutamine 183, glutamate 297, glutamine 309, and arginine 311. Residues 327–752 (FRVYLSVGHQ…TSEGVALSGA (426 aa)) form a rifampicin-binding region. The interval 403-430 (ENGEFEPTPAETDGGAPPAGDGAEPDEA) is disordered. Positions 409–424 (PTPAETDGGAPPAGDG) are enriched in low complexity. Residues 765 to 863 (GLAVSAGTVE…VHGTEGYIEL (99 aa)) are swivel phosphohistidine. Histidine 823 functions as the Tele-phosphohistidine intermediate in the catalytic mechanism.

Belongs to the rifampicin phosphotransferase family.

The enzyme catalyses rifampicin + ATP + H2O = 21-phosphorifampicin + AMP + phosphate + 2 H(+). Its function is as follows. Catalyzes the phosphorylation of rifampicin, also known as rifampin (RIF), leading to its inactivation. Confers high level resistance to a variety of clinically used rifamycin antibiotics. This is Rifampicin phosphotransferase from Streptomyces sp.